The following is a 52-amino-acid chain: Conotoxin Ac4.3a (52 aa).

Residues 1–11 (SDFRNAAVHER) constitute a propeptide that is removed on maturation. Gln-12 is modified (pyrrolidone carboxylic acid). Glu-14 bears the 4-carboxyglutamate mark. O-linked (HexNAc...) threonine glycosylation is found at Thr-18 and Thr-20. 3 positions are modified to 4-hydroxyproline: Pro-28, Pro-33, and Pro-47. Pro-47 is modified (proline amide). Positions 48–52 (GRRND) are excised as a propeptide.

This sequence belongs to the conotoxin A superfamily. In terms of processing, contains 3 disulfide bonds. In terms of tissue distribution, expressed by the venom duct.

Its subcellular location is the secreted. Its function is as follows. Probable neurotoxin with ion channel inhibitor activity. In Conus achatinus (Little frog cone), this protein is Conotoxin Ac4.3a.